A 786-amino-acid polypeptide reads, in one-letter code: Calcium-independent phospholipase A2-gamma (786 aa).

N4 carries N-linked (GlcNAc...) asparagine glycosylation. Disordered regions lie at residues 158 to 180 (KKYS…IIDK), 225 to 285 (KENS…SLPI), and 321 to 348 (SKSQ…EEKK). Basic and acidic residues predominate over residues 225–245 (KENSHFQEKSELEGKKVEEGK). Composition is skewed to polar residues over residues 246–258 (SSSL…TSQA) and 266–285 (SAGT…SLPI). Positions 449 to 644 (LTIDGGGTRG…LLNNPSALAM (196 aa)) constitute a PNPLA domain. A GXGXXG motif is present at residues 453–458 (GGGTRG). The helical transmembrane segment at 483 to 503 (ICGVSTGAILAFMLGLFHLPL) threads the bilayer. Residues 485-489 (GVSTG) carry the GXSXG motif. S487 (nucleophile) is an active-site residue. D631 serves as the catalytic Proton acceptor. Positions 631 to 633 (DGG) match the DGA/G motif. K740 is subject to N6-succinyllysine.

Expressed in kidney, heart and brain.

It localises to the endoplasmic reticulum membrane. It is found in the mitochondrion membrane. The protein localises to the peroxisome membrane. It catalyses the reaction a 1,2-diacyl-sn-glycero-3-phosphocholine + H2O = a 1-acyl-sn-glycero-3-phosphocholine + a fatty acid + H(+). The enzyme catalyses a 1,2-diacyl-sn-glycero-3-phosphocholine + H2O = a 2-acyl-sn-glycero-3-phosphocholine + a fatty acid + H(+). It carries out the reaction a 1,2-diacyl-sn-glycero-3-phosphoethanolamine + H2O = a 1-acyl-sn-glycero-3-phosphoethanolamine + a fatty acid + H(+). The catalysed reaction is a 1-O-(1Z-alkenyl)-2-acyl-sn-glycero-3-phosphocholine + H2O = a 1-O-(1Z-alkenyl)-sn-glycero-3-phosphocholine + a fatty acid + H(+). It catalyses the reaction a 1-acyl-sn-glycero-3-phosphocholine + H2O = sn-glycerol 3-phosphocholine + a fatty acid + H(+). The enzyme catalyses 1-acyl-2-(9Z,12Z)-octadecadienoyl-sn-glycero-3-phosphocholine + H2O = a 1-acyl-sn-glycero-3-phosphocholine + (9Z,12Z)-octadecadienoate + H(+). It carries out the reaction 1-acyl-2-(5Z,8Z,11Z,14Z-eicosatetraenoyl)-sn-glycero-3-phosphocholine + H2O = a 1-acyl-sn-glycero-3-phosphocholine + (5Z,8Z,11Z,14Z)-eicosatetraenoate + H(+). The catalysed reaction is 1-hexadecanoyl-2-(5Z,8Z,11Z,14Z-eicosatetraenoyl)-sn-glycero-3-phosphocholine + H2O = 1-hexadecanoyl-sn-glycero-3-phosphocholine + (5Z,8Z,11Z,14Z)-eicosatetraenoate + H(+). It catalyses the reaction 1-octadecanoyl-2-(9Z-octadecenoyl)-sn-glycero-3-phosphocholine + H2O = 1-octadecanoyl-sn-glycero-3-phosphocholine + (9Z)-octadecenoate + H(+). The enzyme catalyses 1-hexadecanoyl-2-(9Z-octadecenoyl)-sn-glycero-3-phosphocholine + H2O = 1-hexadecanoyl-sn-glycero-3-phosphocholine + (9Z)-octadecenoate + H(+). It carries out the reaction 1-hexadecanoyl-2-(9Z,12Z-octadecadienoyl)-sn-glycero-3-phosphocholine + H2O = (9Z,12Z)-octadecadienoate + 1-hexadecanoyl-sn-glycero-3-phosphocholine + H(+). The catalysed reaction is 1-acyl-2-(9Z,12Z)-octadecadienoyl-sn-glycero-3-phosphoethanolamine + H2O = a 1-acyl-sn-glycero-3-phosphoethanolamine + (9Z,12Z)-octadecadienoate + H(+). It catalyses the reaction 1-acyl-2-(5Z,8Z,11Z,14Z)-eicosatetraenoyl-sn-glycero-3-phosphoethanolamine + H2O = a 1-acyl-sn-glycero-3-phosphoethanolamine + (5Z,8Z,11Z,14Z)-eicosatetraenoate + H(+). The enzyme catalyses 1-hexadecanoyl-2-(5Z,8Z,11Z,14Z-eicosatetraenoyl)-sn-glycero-3-phosphoethanolamine + H2O = 1-hexadecanoyl-sn-glycero-3-phosphoethanolamine + (5Z,8Z,11Z,14Z)-eicosatetraenoate + H(+). It carries out the reaction 1-hexadecanoyl-2-(5Z,8Z,11Z,14Z-eicosatetraenoyl)-sn-glycero-3-phosphocholine + H2O = 2-(5Z,8Z,11Z,14Z)-eicosatetraenoyl-sn-glycero-3-phosphocholine + hexadecanoate + H(+). The catalysed reaction is 1-octadecanoyl-2-(9Z-octadecenoyl)-sn-glycero-3-phosphocholine + H2O = 2-(9Z-octadecenoyl)-sn-glycero-3-phosphocholine + octadecanoate + H(+). It catalyses the reaction 1-hexadecanoyl-2-(4Z,7Z,10Z,13Z,16Z,19Z-docosahexaenoyl)-sn-glycero-3-phosphocholine + H2O = 2-(4Z,7Z,10Z,13Z,16Z,19Z-docosahexaenoyl)-sn-glycero-3-phosphocholine + hexadecanoate + H(+). The enzyme catalyses 1-O-(1Z)-hexadecenyl-2 (5Z,8Z,11Z,14Z)-eicosatetraenoyl-sn-glycero-3-phosphocholine + H2O = 1-(1Z-hexadecenyl)-sn-glycero-3-phosphocholine + (5Z,8Z,11Z,14Z)-eicosatetraenoate + H(+). It carries out the reaction 1-O-(1Z-hexadecenyl)-2-(9Z-octadecenoyl)-sn-glycero-3-phosphocholine + H2O = 1-(1Z-hexadecenyl)-sn-glycero-3-phosphocholine + (9Z)-octadecenoate + H(+). The catalysed reaction is 1-hexadecanoyl-sn-glycero-3-phosphocholine + H2O = sn-glycerol 3-phosphocholine + hexadecanoate + H(+). It catalyses the reaction 1',3'-bis-[1,2-di-(9Z,12Z-octadecadienoyl)-sn-glycero-3-phospho]-glycerol + H2O = 1'-[1,2-di-(9Z,12Z-octadecadienoyl)-sn-glycero-3-phospho]-3'-[1-(9Z,12Z-octadecadienoyl)-sn-glycero-3-phospho]-glycerol + (9Z,12Z)-octadecadienoate + H(+). The enzyme catalyses 1'-[1-acyl-2-(9-hydroxy-(10E,12Z)-octadecadienoyl)-sn-glycero-3-phospho]-3'-[1,2-diacyl-sn-glycero-3-phospho]-glycerol + H2O = 9-hydroxy-(10E,12Z)-octadecadienoate + 1'-[1,2-diacyl-sn-glycero-3-phospho],3'-[1-acyl-sn-glycero-3-phospho]-glycerol + H(+). The protein operates within phospholipid metabolism. Its activity is regulated as follows. Calcium-independent phospholipase. Functionally, calcium-independent and membrane-bound phospholipase, that catalyzes the esterolytic cleavage of fatty acids from glycerophospholipids to yield free fatty acids and lysophospholipids, hence regulating membrane physical properties and the release of lipid second messengers and growth factors. Hydrolyzes phosphatidylethanolamine, phosphatidylcholine and probably phosphatidylinositol with a possible preference for the former. Has also a broad substrate specificity in terms of fatty acid moieties, hydrolyzing saturated and mono-unsaturated fatty acids at nearly equal rates from either the sn-1 or sn-2 position in diacyl phosphatidylcholine. However, has a weak activity toward polyunsaturated fatty acids at the sn-2 position, and thereby favors the production of 2-arachidonoyl lysophosphatidylcholine, a key branch point metabolite in eicosanoid signaling. On the other hand, can produce arachidonic acid from the sn-1 position of diacyl phospholipid and from the sn-2 position of arachidonate-containing plasmalogen substrates. Therefore, plays an important role in the mobilization of arachidonic acid in response to cellular stimuli and the generation of lipid second messengers. Can also hydrolyze lysophosphatidylcholine. In the mitochondrial compartment, catalyzes the hydrolysis and release of oxidized aliphatic chains from cardiolipin and integrates mitochondrial bioenergetics and signaling. It is essential for maintaining efficient bioenergetic mitochondrial function through tailoring mitochondrial membrane lipid metabolism and composition. The chain is Calcium-independent phospholipase A2-gamma from Oryctolagus cuniculus (Rabbit).